Reading from the N-terminus, the 230-residue chain is MSKLVLIRHGQSEWNLSNQFTGWVDVNLSEKGVEEAKKAGRLIKEHGLEFDQAYTSLLTRAIKTLHYALEESDQLWIPETKTWRLNERHYGALQGLNKKATAEKYGDEQVHIWRRSYDVLPPAIDDDNEFSQAHDRRYANLDPHIVPKAENLHVTLDRVMPFWEDNIAPDLLDGKNVIIAAHGNSLRALTKYIENISDDDIMDLEMKTGEPVVYTFDENLDVVNKEKLDD.

Residues 8–15 (RHGQSEWN), 21–22 (TG), Arg-60, 87–90 (ERHY), Lys-98, 114–115 (RR), and 183–184 (GN) contribute to the substrate site. His-9 acts as the Tele-phosphohistidine intermediate in catalysis. Catalysis depends on Glu-87, which acts as the Proton donor/acceptor.

It belongs to the phosphoglycerate mutase family. BPG-dependent PGAM subfamily.

It catalyses the reaction (2R)-2-phosphoglycerate = (2R)-3-phosphoglycerate. The protein operates within carbohydrate degradation; glycolysis; pyruvate from D-glyceraldehyde 3-phosphate: step 3/5. Its function is as follows. Catalyzes the interconversion of 2-phosphoglycerate and 3-phosphoglycerate. This is 2,3-bisphosphoglycerate-dependent phosphoglycerate mutase from Lactobacillus acidophilus (strain ATCC 700396 / NCK56 / N2 / NCFM).